A 149-amino-acid chain; its full sequence is Transcriptional repressor NrdR (149 aa).

The segment at 3-34 (CPFCGTQDTKVIDSRLVADGASVRRRRECNHC) is a zinc-finger region. In terms of domain architecture, ATP-cone spans 49 to 139 (PRVIKTDGSR…VYRSFEDIRE (91 aa)).

This sequence belongs to the NrdR family. The cofactor is Zn(2+).

Negatively regulates transcription of bacterial ribonucleotide reductase nrd genes and operons by binding to NrdR-boxes. This Idiomarina loihiensis (strain ATCC BAA-735 / DSM 15497 / L2-TR) protein is Transcriptional repressor NrdR.